A 271-amino-acid chain; its full sequence is Auxin-responsive protein IAA5 (271 aa).

Residues Met1 to Ala96 form a disordered region. Low complexity-rich tracts occupy residues Ser14–Pro33 and Pro40–Gly50. Positions Leu44–Leu48 match the EAR-like (transcriptional repression) motif. The PB1 domain maps to Pro151–Asp255.

This sequence belongs to the Aux/IAA family. Homodimers and heterodimers.

The protein localises to the nucleus. Its function is as follows. Aux/IAA proteins are short-lived transcriptional factors that function as repressors of early auxin response genes at low auxin concentrations. The chain is Auxin-responsive protein IAA5 (IAA5) from Oryza sativa subsp. japonica (Rice).